We begin with the raw amino-acid sequence, 270 residues long: Hydroxyethylthiazole kinase (270 aa).

Residue Met-47 participates in substrate binding. Arg-123 and Thr-169 together coordinate ATP. Residue Gly-196 participates in substrate binding.

The protein belongs to the Thz kinase family. Mg(2+) serves as cofactor.

It carries out the reaction 5-(2-hydroxyethyl)-4-methylthiazole + ATP = 4-methyl-5-(2-phosphooxyethyl)-thiazole + ADP + H(+). The protein operates within cofactor biosynthesis; thiamine diphosphate biosynthesis; 4-methyl-5-(2-phosphoethyl)-thiazole from 5-(2-hydroxyethyl)-4-methylthiazole: step 1/1. Its function is as follows. Catalyzes the phosphorylation of the hydroxyl group of 4-methyl-5-beta-hydroxyethylthiazole (THZ). The protein is Hydroxyethylthiazole kinase of Roseiflexus castenholzii (strain DSM 13941 / HLO8).